We begin with the raw amino-acid sequence, 607 residues long: Chaperone protein DnaK (607 aa).

Residue T173 is modified to Phosphothreonine; by autocatalysis. Composition is skewed to basic and acidic residues over residues 490 to 509 and 524 to 542; these read EQNA…RNEA and GDNV…KEAL. Disordered stretches follow at residues 490-510, 524-555, and 574-607; these read EQNA…NEAD, GDNV…EDIK, and QQAQ…KDNK. The span at 574–587 shows a compositional bias: polar residues; it reads QQAQQGDAAGSNQS. Basic and acidic residues predominate over residues 595–607; that stretch reads TEVKDDDDKKDNK.

Belongs to the heat shock protein 70 family.

Functionally, acts as a chaperone. The sequence is that of Chaperone protein DnaK from Staphylococcus carnosus (strain TM300).